Consider the following 474-residue polypeptide: tRNA-2-methylthio-N(6)-dimethylallyladenosine synthase (474 aa).

The MTTase N-terminal domain occupies 3–120 (KKLHIKTWGC…LPEMINHVQE (118 aa)). [4Fe-4S] cluster-binding residues include Cys12, Cys49, Cys83, Cys157, Cys161, and Cys164. Residues 143-375 (RAEGPTAFVS…QQRISQQAME (233 aa)) form the Radical SAM core domain. The 64-residue stretch at 378–441 (RKMVGTVQRV…ASSLRGILLR (64 aa)) folds into the TRAM domain.

Belongs to the methylthiotransferase family. MiaB subfamily. Monomer. Requires [4Fe-4S] cluster as cofactor.

The protein resides in the cytoplasm. It carries out the reaction N(6)-dimethylallyladenosine(37) in tRNA + (sulfur carrier)-SH + AH2 + 2 S-adenosyl-L-methionine = 2-methylsulfanyl-N(6)-dimethylallyladenosine(37) in tRNA + (sulfur carrier)-H + 5'-deoxyadenosine + L-methionine + A + S-adenosyl-L-homocysteine + 2 H(+). Catalyzes the methylthiolation of N6-(dimethylallyl)adenosine (i(6)A), leading to the formation of 2-methylthio-N6-(dimethylallyl)adenosine (ms(2)i(6)A) at position 37 in tRNAs that read codons beginning with uridine. The polypeptide is tRNA-2-methylthio-N(6)-dimethylallyladenosine synthase (Yersinia pseudotuberculosis serotype O:3 (strain YPIII)).